We begin with the raw amino-acid sequence, 313 residues long: GDP-D-glycero-alpha-D-manno-heptose dehydrogenase (313 aa).

Residues 13-14 (YI), 33-39 (DNLMFDQ), Phe-37, 57-58 (DA), Leu-77, and 144-148 (YGIDK) each bind NADH. Thr-168 provides a ligand contact to GDP. Residues Val-169 and 175-177 (RMR) each bind NADH. GDP-binding positions include 179-184 (DLLVND), 196-198 (VLF), Arg-204, Lys-242, and Arg-270. NADH is bound at residue Asn-311.

In terms of assembly, homotetramer. NAD(+) is required as a cofactor.

It catalyses the reaction GDP-D-glycero-alpha-D-manno-heptose + 2-oxoglutarate = GDP-D-glycero-4-keto-alpha-D-lyxo-heptose + (S)-2-hydroxyglutarate. The protein operates within capsule biogenesis; capsule polysaccharide biosynthesis. In terms of biological role, NAD-dependent dehydrogenase involved in the biosynthesis of heptose moieties with a hydroxyl group at C6 found on the capsular polysaccharide (CPS) of C.jejuni. Catalyzes the initial oxidation of C4 of the GDP-D-glycero-alpha-D-manno-heptose to form GDP-D-glycero-4-keto-alpha-D-lyxo-heptose in the presence of alpha-ketoglutarate required to recycle the NADH nucleotide. The polypeptide is GDP-D-glycero-alpha-D-manno-heptose dehydrogenase (Campylobacter jejuni subsp. jejuni serotype O:2 (strain ATCC 700819 / NCTC 11168)).